A 536-amino-acid polypeptide reads, in one-letter code: Protein ST7 homolog (536 aa).

The next 2 membrane-spanning stretches (helical) occupy residues 3–23 and 49–69; these read CSWTFLWLLWIAMVAVLLFFL and FYVALTGTSSLVSGIILIFEW. Positions 192–219 form a coiled coil; that stretch reads AEEDTETVAQAENVLRRALRAIENTLST. The chain crosses the membrane as a helical span at residues 464 to 484; it reads STLGMLIQTFACLAICILAVL.

Belongs to the ST7 family.

It localises to the membrane. This is Protein ST7 homolog from Caenorhabditis briggsae.